A 152-amino-acid chain; its full sequence is Ribosome maturation factor RimP (152 aa).

This sequence belongs to the RimP family.

It is found in the cytoplasm. Required for maturation of 30S ribosomal subunits. The chain is Ribosome maturation factor RimP from Teredinibacter turnerae (strain ATCC 39867 / T7901).